The sequence spans 1154 residues: Large proline-rich protein BAG6 (1154 aa).

Met-1 is modified (N-acetylmethionine). The Ubiquitin-like domain maps to 17–92 (LEVLVKTLDS…HLVERAPPQT (76 aa)). Disordered stretches follow at residues 87-125 (RAPP…ASVH), 186-274 (RGGT…HPSP), 387-442 (TMTG…SSHP), 463-531 (QDSG…QGAG), and 568-626 (AQAQ…SAAD). Ser-96 bears the Phosphoserine mark. Positions 96-112 (SGASSGTGSASATHGGA) are enriched in low complexity. Position 117 is a phosphothreonine (Thr-117). Residues 209–218 (VALNSQTSEP) are compositionally biased toward polar residues. The stretch at 237–271 (RPPTQTPELAPSGPAPAGPAPAGPAPAPETNAPNH) is repeat 1. The 4 X 29 AA approximate repeats stretch occupies residues 237–658 (RPPTQTPELA…MASPTITVAM (422 aa)). A compositionally biased stretch (pro residues) spans 249–263 (GPAPAGPAPAGPAPA). Residues 400–409 (GAEAATPGSA) show a composition bias toward low complexity. Residues 410-426 (QATSLPPSSTTVDSSTE) are compositionally biased toward polar residues. Residues 416-444 (PSSTTVDSSTEGAPPPGPAPPPASSHPRV) form repeat 2. Composition is skewed to pro residues over residues 428–439 (APPPGPAPPPAS) and 508–521 (PTPP…PGGP). Low complexity-rich tracts occupy residues 568–581 (AQAQ…AQAP) and 591–609 (PATA…TAGP). 2 repeat units span residues 597-624 (SAGT…QPSA) and 630-658 (SQLL…TVAM). Over residues 611–622 (PGGPAQPPPPQP) the composition is skewed to pro residues. Disordered regions lie at residues 673–719 (QASQ…ESLP) and 968–1154 (PPQT…ADDP). Residues 678-702 (APPPPPPPPPPPPAPEQQSTPPPGS) are compositionally biased toward pro residues. Phosphoserine occurs at positions 986 and 995. The segment covering 1029 to 1042 (AEPWAAAVPPEWVP) has biased composition (low complexity). Residues 1032–1062 (WAAAVPPEWVPIIQQDIQSQRKVKPQPPLSD) are required for interaction with GET4. A Nuclear localization site motif is present at residues 1034-1076 (AAVPPEWVPIIQQDIQSQRKVKPQPPLSDAYLSGMPAKRRKTM). The interval 1044–1154 (IQQDIQSQRK…NAHRAFADDP (111 aa)) is sufficient for the delivery of client proteins to the endoplasmic reticulum. Residue Thr-1075 is modified to Phosphothreonine. A BAG-similar domain, required and sufficient for interaction with UBL4A region spans residues 1080 to 1137 (GPQLLLSEAVSRAAKAAGARPLTSPESLSRDLEAPEVQESYRQQLRSDIQKRLQEDPN). The segment covering 1088–1098 (AVSRAAKAAGA) has biased composition (low complexity). Residues Ser-1103 and Ser-1139 each carry the phosphoserine modification.

Component of the BAG6/BAT3 complex, also named BAT3 complex, at least composed of BAG6, UBL4A and GET4/TRC35. Interacts with GET4; the interaction is direct and localizes BAG6 in the cytosol. Interacts with UBL4A; the interaction is direct and required for UBL4A protein stability. Interacts with AIFM1. Interacts with HSPA2. Interacts with CTCFL. Interacts with p300/EP300. Interacts (via ubiquitin-like domain) with RNF126; required for BAG6-dependent ubiquitination of proteins mislocalized to the cytosol. Interacts (via ubiquitin-like domain) with SGTA; SGTA competes with RNF126 by binding the same region of BAG6, thereby promoting deubiquitination of BAG6-target proteins and rescuing them from degradation. Interacts with ricin A chain. Interacts with VCP and AMFR; both form the VCP/p97-AMFR/gp78 complex. Interacts with SYVN1. Interacts with USP13; the interaction is direct and may mediate UBL4A deubiquitination. Interacts with ZFAND2B. Interacts with KPNA2. Interacts with UBQLN4. Ricin can induce a cleavage by the caspase CASP3. The released C-terminal peptide induces apoptosis.

The protein localises to the cytoplasm. It localises to the cytosol. It is found in the nucleus. The protein resides in the secreted. Its subcellular location is the extracellular exosome. In terms of biological role, ATP-independent molecular chaperone preventing the aggregation of misfolded and hydrophobic patches-containing proteins. Functions as part of a cytosolic protein quality control complex, the BAG6/BAT3 complex, which maintains these client proteins in a soluble state and participates in their proper delivery to the endoplasmic reticulum or alternatively can promote their sorting to the proteasome where they undergo degradation. The BAG6/BAT3 complex is involved in the post-translational delivery of tail-anchored/type II transmembrane proteins to the endoplasmic reticulum membrane. Recruited to ribosomes, it interacts with the transmembrane region of newly synthesized tail-anchored proteins and together with SGTA and ASNA1 mediates their delivery to the endoplasmic reticulum. Client proteins that cannot be properly delivered to the endoplasmic reticulum are ubiquitinated by RNF126, an E3 ubiquitin-protein ligase associated with BAG6 and are sorted to the proteasome. SGTA which prevents the recruitment of RNF126 to BAG6 may negatively regulate the ubiquitination and the proteasomal degradation of client proteins. Similarly, the BAG6/BAT3 complex also functions as a sorting platform for proteins of the secretory pathway that are mislocalized to the cytosol either delivering them to the proteasome for degradation or to the endoplasmic reticulum. The BAG6/BAT3 complex also plays a role in the endoplasmic reticulum-associated degradation (ERAD), a quality control mechanism that eliminates unwanted proteins of the endoplasmic reticulum through their retrotranslocation to the cytosol and their targeting to the proteasome. It maintains these retrotranslocated proteins in an unfolded yet soluble state condition in the cytosol to ensure their proper delivery to the proteasome. BAG6 is also required for selective ubiquitin-mediated degradation of defective nascent chain polypeptides by the proteasome. In this context, it may participate in the production of antigenic peptides and play a role in antigen presentation in immune response. BAG6 is also involved in endoplasmic reticulum stress-induced pre-emptive quality control, a mechanism that selectively attenuates the translocation of newly synthesized proteins into the endoplasmic reticulum and reroutes them to the cytosol for proteasomal degradation. BAG6 may ensure the proper degradation of these proteins and thereby protects the endoplasmic reticulum from protein overload upon stress. By inhibiting the polyubiquitination and subsequent proteasomal degradation of HSPA2 it may also play a role in the assembly of the synaptonemal complex during spermatogenesis. Also positively regulates apoptosis by interacting with and stabilizing the proapoptotic factor AIFM1. By controlling the steady-state expression of the IGF1R receptor, indirectly regulates the insulin-like growth factor receptor signaling pathway. Its function is as follows. Involved in DNA damage-induced apoptosis: following DNA damage, accumulates in the nucleus and forms a complex with p300/EP300, enhancing p300/EP300-mediated p53/TP53 acetylation leading to increase p53/TP53 transcriptional activity. When nuclear, may also act as a component of some chromatin regulator complex that regulates histone 3 'Lys-4' dimethylation (H3K4me2). Functionally, released extracellularly via exosomes, it is a ligand of the natural killer/NK cells receptor NCR3 and stimulates NK cells cytotoxicity. It may thereby trigger NK cells cytotoxicity against neighboring tumor cells and immature myeloid dendritic cells (DC). May mediate ricin-induced apoptosis. The protein is Large proline-rich protein BAG6 of Mus musculus (Mouse).